Here is a 444-residue protein sequence, read N- to C-terminus: MPKTYHFIGIKGSGMSALALMLHQMGHKVQGSDVEKYYFTQRGLEQAGITILPFDEKNLDGDMEIIAGNAFRPDNNVEIAYADQNGISYKRYHEFLGSFMRDFVSMGVAGAHGKTSTTGMLSHVLSHITDTSFLIGDGTGRGSANAKYFVFESDEYERHFMPYHPEYSIITNIDFDHPDYFTSLEDVFNAFNDYAKQITKGLFVYGEDAELRKITSDAPIYYYGFEAEGNDFVASDLLRSTTGSTFTVHFRGQNLGQFHIPTFGRHNIMNATAVIGLLYTAGFDLNLVREHLKTFSGVKRRFTEKIVNDTVIIDDFAHHPTEIIATLDAARQKYPSKEIVAVFQPHTFTRTIALLDDFAHALNQADAVYLAQIYGSAREVDHGDVKVEDLANKINKKHQVITVENVSPLLDHDNAVYVFMGAGDIQTYEYSFERLLSNLTSNVQ.

Residue 110-116 (GAHGKTS) participates in ATP binding.

It belongs to the MurCDEF family.

It localises to the cytoplasm. It catalyses the reaction UDP-N-acetyl-alpha-D-muramate + L-alanine + ATP = UDP-N-acetyl-alpha-D-muramoyl-L-alanine + ADP + phosphate + H(+). It participates in cell wall biogenesis; peptidoglycan biosynthesis. Functionally, cell wall formation. The sequence is that of UDP-N-acetylmuramate--L-alanine ligase from Streptococcus pneumoniae (strain Hungary19A-6).